The sequence spans 163 residues: Halocyanin (163 aa).

Positions 1-24 (MKDISRRRFVLGTGATVAAATLAG) are cleaved as a signal peptide. Cysteine 25 is modified (N-acetylcysteine). The S-archaeol cysteine moiety is linked to residue cysteine 25. Residues 26–38 (NGNGNGNGNGNGN) are compositionally biased toward gly residues. The interval 26–48 (NGNGNGNGNGNGNGEPDTPEGRA) is disordered. The 116-residue stretch at 48–163 (ADQFLTDNDA…QGMYGAVIVE (116 aa)) folds into the Plastocyanin-like domain. Residues histidine 110, cysteine 148, histidine 151, and methionine 156 each contribute to the Cu cation site.

The protein resides in the cell membrane. Functionally, electron donor. Binds one copper ion. The chain is Halocyanin (hcy) from Natronomonas pharaonis (Natronobacterium pharaonis).